We begin with the raw amino-acid sequence, 67 residues long: DNA-directed RNA polymerase subunit omega (67 aa).

The protein belongs to the RNA polymerase subunit omega family. In terms of assembly, the RNAP catalytic core consists of 2 alpha, 1 beta, 1 beta' and 1 omega subunit. When a sigma factor is associated with the core the holoenzyme is formed, which can initiate transcription.

It carries out the reaction RNA(n) + a ribonucleoside 5'-triphosphate = RNA(n+1) + diphosphate. Its function is as follows. Promotes RNA polymerase assembly. Latches the N- and C-terminal regions of the beta' subunit thereby facilitating its interaction with the beta and alpha subunits. This is DNA-directed RNA polymerase subunit omega from Burkholderia pseudomallei (strain 1106a).